Reading from the N-terminus, the 224-residue chain is Putative cobalt transport protein CbiM (224 aa).

Helical transmembrane passes span 8–28 (LPPL…VYGI), 41–61 (AMPM…LKMP), 75–95 (FGAV…VLVF), 108–128 (LGAN…AVWL), 138–158 (EIAM…VTAI), and 169–189 (FFTA…PLAI).

It belongs to the CbiM family. In terms of assembly, forms an energy-coupling factor (ECF) transporter complex composed of an ATP-binding protein (A component, CbiO), a transmembrane protein (T component, CbiQ) and 2 possible substrate-capture proteins (S components, CbiM and CbiN) of unknown stoichimetry.

The protein localises to the cell membrane. Its pathway is cofactor biosynthesis; adenosylcobalamin biosynthesis. In terms of biological role, part of the energy-coupling factor (ECF) transporter complex CbiMNOQ involved in cobalt import. This chain is Putative cobalt transport protein CbiM, found in Methanosphaera stadtmanae (strain ATCC 43021 / DSM 3091 / JCM 11832 / MCB-3).